A 577-amino-acid chain; its full sequence is Moesin (577 aa).

One can recognise an FERM domain in the interval 2-295 (PKTISVRVTT…GNHELYMRRR (294 aa)). Ser-74 is modified (phosphoserine). Position 79 is an N6-acetyllysine (Lys-79). Position 83 is an N6-succinyllysine (Lys-83). The [IL]-x-C-x-x-[DE] motif motif lies at 115–120 (IYCPPE). The residue at position 116 (Tyr-116) is a Phosphotyrosine. Cys-117 carries the post-translational modification S-nitrosocysteine. An N6-acetyllysine mark is found at Lys-139 and Lys-165. Disordered regions lie at residues 323–342 (LENEKKKREMAEKEKEKIER), 375–409 (LEQERKRAQSEAEKLAKERQEAEEAKEALLQASRD), and 466–518 (AMST…NERV). Positions 375–401 (LEQERKRAQSEAEKLAKERQEAEEAKE) are enriched in basic and acidic residues. At Ser-407 the chain carries Phosphoserine. A compositionally biased stretch (acidic residues) spans 476–487 (AENEQDEQDENG). The segment covering 492 to 518 (ADLRADAMAKDRSEEERTTEAEKNERV) has biased composition (basic and acidic residues). A Phosphoserine modification is found at Ser-527. A Phosphothreonine; by ROCK2 and STK10 modification is found at Thr-558.

In resting T-cells, part of a PAG1-NHERF1-MSN complex which is disrupted upon TCR activation. Interacts with NHERF1. Interacts with PPP1R16B. Interacts with SELPLG and SYK; these interactions mediate the activation of SYK by SELPLG. Interacts with PDPN (via cytoplasmic domain); this interaction activates RHOA and promotes epithelial-mesenchymal transition. Interacts with SPN/CD43 cytoplasmic tail. Interacts with CD44. Interacts with ICAM2. Interacts with ICAM3 (via C-terminus). Interacts with PDZD8. Interacts with F-actin. Interacts with CD46. Interacts with PTPN6. In terms of assembly, (Microbial infection) Interacts with HIV-1 envelope protein gp120. In terms of processing, phosphorylation on Thr-558 is crucial for the formation of microvilli-like structures. Phosphorylation by ROCK2 suppresses the head-to-tail association of the N-terminal and C-terminal halves resulting in an opened conformation which is capable of actin and membrane-binding. Phosphorylation on Thr-558 by STK10 negatively regulates lymphocyte migration and polarization. S-nitrosylation of Cys-117 is induced by interferon-gamma and oxidatively-modified low-densitity lipoprotein (LDL(ox)) implicating the iNOS-S100A8/9 transnitrosylase complex. As to expression, in all tissues and cultured cells studied.

The protein resides in the cell membrane. It localises to the cytoplasm. It is found in the cytoskeleton. Its subcellular location is the apical cell membrane. The protein localises to the cell projection. The protein resides in the microvillus membrane. It localises to the microvillus. With respect to regulation, a head-to-tail association, of the N-terminal and C-terminal halves results in a closed conformation (inactive form) which is incapable of actin or membrane-binding. In terms of biological role, ezrin-radixin-moesin (ERM) family protein that connects the actin cytoskeleton to the plasma membrane and thereby regulates the structure and function of specific domains of the cell cortex. Tethers actin filaments by oscillating between a resting and an activated state providing transient interactions between moesin and the actin cytoskeleton. Once phosphorylated on its C-terminal threonine, moesin is activated leading to interaction with F-actin and cytoskeletal rearrangement. These rearrangements regulate many cellular processes, including cell shape determination, membrane transport, and signal transduction. The role of moesin is particularly important in immunity acting on both T and B-cells homeostasis and self-tolerance, regulating lymphocyte egress from lymphoid organs. Modulates phagolysosomal biogenesis in macrophages. Also participates in immunologic synapse formation. This Homo sapiens (Human) protein is Moesin.